We begin with the raw amino-acid sequence, 421 residues long: Acetylglutamate kinase (421 aa).

Residues 1–252 (MASTKEISQY…PLESSVSITR (252 aa)) form an acetylglutamate kinase region. Residues 59-60 (AG), R81, and N170 contribute to the substrate site. The N-acetyltransferase domain maps to 274–420 (ERVIRATTWK…HCAQHPPTLI (147 aa)).

It in the N-terminal section; belongs to the acetylglutamate kinase family. ArgB subfamily.

The protein localises to the cytoplasm. The enzyme catalyses N-acetyl-L-glutamate + ATP = N-acetyl-L-glutamyl 5-phosphate + ADP. Its pathway is amino-acid biosynthesis; L-arginine biosynthesis; N(2)-acetyl-L-ornithine from L-glutamate: step 2/4. This chain is Acetylglutamate kinase (argB), found in Xylella fastidiosa (strain 9a5c).